The primary structure comprises 666 residues: LEAF RUST 10 DISEASE-RESISTANCE LOCUS RECEPTOR-LIKE PROTEIN KINASE-like 2.5 (666 aa).

The signal sequence occupies residues 1-30 (MINFSLSLTKSMSYSFIWMLFVIHISCVLS). Residues 31–275 (ADGNHILCSP…PTRNKVILKL (245 aa)) are Extracellular-facing. Residues asparagine 119, asparagine 141, asparagine 171, and asparagine 198 are each glycosylated (N-linked (GlcNAc...) asparagine). Residues 276–296 (FFIVIYVLGIGAASFAMMGVI) traverse the membrane as a helical segment. Over 297–666 (LVVTCLNCLI…YTEICSINVA (370 aa)) the chain is Cytoplasmic. Residues 348-636 (KSFAEVIGKG…ALEVPPRPVL (289 aa)) form the Protein kinase domain. ATP-binding positions include 354-362 (IGKGGFGTV) and lysine 376. Tyrosine 420 bears the Phosphotyrosine mark. Aspartate 471 acts as the Proton acceptor in catalysis. Phosphothreonine is present on residues threonine 508 and threonine 511.

It belongs to the protein kinase superfamily. Ser/Thr protein kinase family.

The protein resides in the membrane. It carries out the reaction L-seryl-[protein] + ATP = O-phospho-L-seryl-[protein] + ADP + H(+). It catalyses the reaction L-threonyl-[protein] + ATP = O-phospho-L-threonyl-[protein] + ADP + H(+). The sequence is that of LEAF RUST 10 DISEASE-RESISTANCE LOCUS RECEPTOR-LIKE PROTEIN KINASE-like 2.5 from Arabidopsis thaliana (Mouse-ear cress).